Reading from the N-terminus, the 209-residue chain is Guanylate kinase (209 aa).

Positions 7-185 (GNLYIVAAPS…AAMELQSIVI (179 aa)) constitute a Guanylate kinase-like domain. 14–21 (APSGGGKT) serves as a coordination point for ATP.

It belongs to the guanylate kinase family.

Its subcellular location is the cytoplasm. The catalysed reaction is GMP + ATP = GDP + ADP. In terms of biological role, essential for recycling GMP and indirectly, cGMP. The protein is Guanylate kinase of Legionella pneumophila (strain Lens).